The sequence spans 242 residues: UPF0309 protein BMEA_B0892 (242 aa).

The region spanning 30 to 214 is the SIS domain; the sequence is AADLIAAAAR…ARLVGEGDAP (185 aa).

It belongs to the UPF0309 family.

The chain is UPF0309 protein BMEA_B0892 from Brucella melitensis biotype 2 (strain ATCC 23457).